Here is a 398-residue protein sequence, read N- to C-terminus: MAKRVHLFDWHKEHAKKIEEFAGWEMPIWYSSIKEEHLAVRNAVGLFDVSHMGEIYFRGKDALKFLQYVTTNDISKPPAISGIYTLVLNERGAIKDETLIFNMGNNEYLMICDSDAFEKLYAWFTYLKKTIEQFTKLDLEIELKTYDIAMFAVQGPKARDLARDLFGIDINEMWWFQARWVELDGIKMLLSRSGYTGENGFEVYIEDANPYHPDESKRGEPEKALHVWERILEEGKKYGIKPAGLGARDTLRLEAGYTLYGNETKELQLLSTDIDEVTPLQANLEFAIYWDKDFIGKDALLKQKERGLGRKLVHFKMVDKGIPREGYKVYANGELIGEVTSGTLSPLLNVGIGIAFVKEEYAKPGIEIEVEIRGARKKAITVTPPFYDPKKYGLFRET.

The protein belongs to the GcvT family. In terms of assembly, the glycine cleavage system is composed of four proteins: P, T, L and H.

It carries out the reaction N(6)-[(R)-S(8)-aminomethyldihydrolipoyl]-L-lysyl-[protein] + (6S)-5,6,7,8-tetrahydrofolate = N(6)-[(R)-dihydrolipoyl]-L-lysyl-[protein] + (6R)-5,10-methylene-5,6,7,8-tetrahydrofolate + NH4(+). In terms of biological role, the glycine cleavage system catalyzes the degradation of glycine. This is Probable aminomethyltransferase from Pyrococcus abyssi (strain GE5 / Orsay).